Consider the following 83-residue polypeptide: Small ribosomal subunit protein uS17 (83 aa).

This sequence belongs to the universal ribosomal protein uS17 family. Part of the 30S ribosomal subunit.

Functionally, one of the primary rRNA binding proteins, it binds specifically to the 5'-end of 16S ribosomal RNA. The polypeptide is Small ribosomal subunit protein uS17 (Ehrlichia chaffeensis (strain ATCC CRL-10679 / Arkansas)).